The sequence spans 367 residues: Voltage-gated potassium channel subunit beta-2 (367 aa).

A phosphoserine mark is found at Ser-9, Ser-14, and Ser-20. An Asymmetric dimethylarginine; alternate modification is found at Arg-28. Arg-28 is modified (omega-N-methylarginine; alternate). Ser-31 bears the Phosphoserine mark. NADP(+)-binding residues include Thr-56, Trp-57, Gln-63, and Asp-85. Tyr-90 serves as the catalytic Proton donor/acceptor. Ser-112 carries the phosphoserine modification. Lys-124 is modified (N6-acetyllysine). Residues Asn-158, Ser-188, Arg-189, Gln-214, Trp-243, Ser-244, Pro-245, Leu-246, Ala-247, Cys-248, Lys-254, Tyr-262, Arg-264, Gly-323, Ser-325, Gln-329, Glu-332, and Asn-333 each contribute to the NADP(+) site.

This sequence belongs to the shaker potassium channel beta subunit family. Homotetramer. Interaction with tetrameric potassium channel alpha subunits gives rise to a heterooctamer. Identified in potassium channel complexes containing KCNA1, KCNA2, KCNA4, KCNA5, KCNA6, KCNAB1, KCNAB2 and KCND3. Interacts (in unphosphorylated form) with MAPRE1. Forms a ternary complex with SQSTM1 and PRKCZ. Post-translationally, phosphorylated by PRKCZ; may be regulated by incorporation in a complex composed of PRKCZ and SQSTM1. Detected in the juxtaparanodal region of nodes of Ranvier in myelinated nerve fibers in the spinal cord (at protein level).

Its subcellular location is the cytoplasm. The protein localises to the membrane. It localises to the cell membrane. It is found in the cell projection. The protein resides in the axon. Its subcellular location is the synapse. The protein localises to the synaptosome. It localises to the cytoskeleton. The enzyme catalyses hydroxyacetone + NADP(+) = methylglyoxal + NADPH + H(+). The catalysed reaction is (E)-4-oxonon-2-en-1-ol + NADP(+) = (E)-4-oxonon-2-enal + NADPH + H(+). In terms of biological role, regulatory subunit of the voltage-gated potassium (Kv) Shaker channels composed of pore-forming and potassium-conducting alpha subunits and of regulatory beta subunits. The beta-2/KCNAB2 cytoplasmic subunit promotes potassium channel closure via a mechanism that does not involve physical obstruction of the channel pore. Promotes the inactivation of Kv1.4/KCNA4 and Kv1.5/KCNA5 alpha subunit-containing channels. Displays nicotinamide adenine dinucleotide phosphate (NADPH)-dependent aldoketoreductase activity by catalyzing the NADPH-dependent reduction of a wide range of aldehyde and ketone substrates. Substrate specificity includes methylglyoxal, 9,10-phenanthrenequinone, prostaglandin J2, 4-nitrobenzaldehyde, 4-nitroacetophenone and 4-oxo-trans-2-nonenal (in vitro, no physiological substrate identified yet). The binding of oxidized and reduced nucleotide alters Kv channel gating and may contribute to dynamic fine tuning of cell excitability. Contributes to the regulation of nerve signaling, and prevents neuronal hyperexcitability. This is Voltage-gated potassium channel subunit beta-2 (KCNAB2) from Bos taurus (Bovine).